Here is a 248-residue protein sequence, read N- to C-terminus: Ubiquinone biosynthesis O-methyltransferase (248 aa).

Positions 40, 71, 92, and 135 each coordinate S-adenosyl-L-methionine.

The protein belongs to the methyltransferase superfamily. UbiG/COQ3 family.

The enzyme catalyses a 3-demethylubiquinol + S-adenosyl-L-methionine = a ubiquinol + S-adenosyl-L-homocysteine + H(+). It carries out the reaction a 3-(all-trans-polyprenyl)benzene-1,2-diol + S-adenosyl-L-methionine = a 2-methoxy-6-(all-trans-polyprenyl)phenol + S-adenosyl-L-homocysteine + H(+). It functions in the pathway cofactor biosynthesis; ubiquinone biosynthesis. Functionally, O-methyltransferase that catalyzes the 2 O-methylation steps in the ubiquinone biosynthetic pathway. This chain is Ubiquinone biosynthesis O-methyltransferase, found in Ruegeria pomeroyi (strain ATCC 700808 / DSM 15171 / DSS-3) (Silicibacter pomeroyi).